Consider the following 178-residue polypeptide: MPKPKKGARFGGSASHQKAIFANLATALFEHGRITTTEAKAKAVRPYAEKLITKAKAGTLADRREVLKVIRNKDVVHSLFAEIGPSFEGREGGYTRITKTLPRKGDNAPMAIIELVREKTVTNEADRARRVAASKKAEEQAPAAEAEEQAPAAEAEAPAADAAAEAKADEAAEDKKDA.

Over residues 126-139 the composition is skewed to basic and acidic residues; sequence DRARRVAASKKAEE. The tract at residues 126 to 178 is disordered; that stretch reads DRARRVAASKKAEEQAPAAEAEEQAPAAEAEAPAADAAAEAKADEAAEDKKDA. A compositionally biased stretch (low complexity) spans 140–163; sequence QAPAAEAEEQAPAAEAEAPAADAA. Over residues 164-178 the composition is skewed to basic and acidic residues; the sequence is AEAKADEAAEDKKDA.

It belongs to the bacterial ribosomal protein bL17 family. As to quaternary structure, part of the 50S ribosomal subunit. Contacts protein L32.

This Nocardia farcinica (strain IFM 10152) protein is Large ribosomal subunit protein bL17.